The primary structure comprises 244 residues: RNA transcription, translation and transport factor protein (244 aa).

3 positions are modified to N6-acetyllysine: Lys-20, Lys-62, and Lys-98.

Belongs to the RTRAF family. Homodimer. Interacts with FAM98A (via N- and C-terminus). Interacts with NIN; which may prevent phosphorylation of NIN. Interacts with POLR2A. Component of a tRNA-splicing ligase complex with FAM98B, DDX1 and RTCB. In terms of assembly, (Microbial infection) Interacts with influenza A virus (IAV) RNA polymerase subunits PA, PB1 and PB2, and nucleocapsid NP. Associates with IAV polymerase complexes both in the nucleus and cytosol. Associates with IAV ribonucleoproteins (vRNP) packaged in virions. Interacts with hepatitis C virus core protein p19. Widely expressed. Expressed at high level in heart and skeletal muscle. Expressed at intermediate level in liver, pancreas, fetal brain and fetal lung. Weakly expressed in adult brain, adult lung, placenta, fetal liver and fetal kidney. Overexpressed in many brain tumors.

It localises to the nucleus. It is found in the cytoplasm. The protein localises to the cytosol. Its subcellular location is the perinuclear region. The protein resides in the cytoskeleton. It localises to the microtubule organizing center. It is found in the centrosome. Its function is as follows. RNA-binding protein involved in modulation of mRNA transcription by Polymerase II. Component of the tRNA-splicing ligase complex and is required for tRNA ligation. May be required for RNA transport. Functionally, (Microbial infection) In case of infection by influenza virus A (IVA), is involved in viral replication. The polypeptide is RNA transcription, translation and transport factor protein (Homo sapiens (Human)).